The sequence spans 677 residues: Fermitin family homolog 1 (677 aa).

In terms of domain architecture, FERM spans 96 to 653 (MLRLRLPNLK…HEYIGGYIFL (558 aa)). Phosphoserine is present on residues S170, S179, and S361. Residues 377-473 (KLFRPKKLLP…WMAACMLASK (97 aa)) enclose the PH domain.

It belongs to the kindlin family. As to quaternary structure, interacts with the cytoplasmic domain of integrins ITGB1 and ITGB3. In terms of tissue distribution, expressed in brain, skeletal muscle, kidney, colon, adrenal gland, prostate, and placenta. Weakly or not expressed in heart, thymus, spleen, liver, small intestine, bone marrow, lung and peripheral blood leukocytes. Overexpressed in some colon and lung tumors. In skin, it is localized within the epidermis and particularly in basal keratocytes. Not detected in epidermal melanocytes and dermal fibroblasts.

Its subcellular location is the cytoplasm. It localises to the cytoskeleton. It is found in the cell junction. The protein localises to the focal adhesion. The protein resides in the cell projection. Its subcellular location is the ruffle membrane. Functionally, involved in cell adhesion. Contributes to integrin activation. When coexpressed with talin, potentiates activation of ITGA2B. Required for normal keratinocyte proliferation. Required for normal polarization of basal keratinocytes in skin, and for normal cell shape. Required for normal adhesion of keratinocytes to fibronectin and laminin, and for normal keratinocyte migration to wound sites. May mediate TGF-beta 1 signaling in tumor progression. The protein is Fermitin family homolog 1 (FERMT1) of Homo sapiens (Human).